Here is a 417-residue protein sequence, read N- to C-terminus: Gamma-glutamyl phosphate reductase (417 aa).

This sequence belongs to the gamma-glutamyl phosphate reductase family.

It localises to the cytoplasm. The enzyme catalyses L-glutamate 5-semialdehyde + phosphate + NADP(+) = L-glutamyl 5-phosphate + NADPH + H(+). It participates in amino-acid biosynthesis; L-proline biosynthesis; L-glutamate 5-semialdehyde from L-glutamate: step 2/2. Functionally, catalyzes the NADPH-dependent reduction of L-glutamate 5-phosphate into L-glutamate 5-semialdehyde and phosphate. The product spontaneously undergoes cyclization to form 1-pyrroline-5-carboxylate. This chain is Gamma-glutamyl phosphate reductase, found in Streptococcus agalactiae serotype Ia (strain ATCC 27591 / A909 / CDC SS700).